Consider the following 585-residue polypeptide: MAKTTPMAKPSVGLLTLQVLVFCALTGSLASAGSIGHVTPRSDLCDSEVYCQGELLKTIQLGEVFKDGKTFVDHYQVNDPSVTVANFRKLMAETGGKPNKDQLTQYVKENFAQENEVIDWSPPDWQENPEFLQRVQDPVFRKWAKDLNDVWKIISRKVAPSVAEHPERHSIISVDNGFIVPGGRFQEFYYWDSYWVMEGLLLTGMKNTSRGILENFLSMVTRFGFIPNGGRVYYLMRSQPPLLIPMVDLYLTHTGDMQFLRDNIGTLEKELGYFLSQKTVDVTKNGKTYKMARYIVSSNGPRPESYREDYELAKNINDEAEKRRFYEDLKAAAESGWDFSSRWYISENGTRGSLSNIATRNIIPVELNAFLQRNARMLAQFHTTLGNPTKAKYYKDIATSYQQAIDDVLWSESEGVWLDFDLRNSQHRNYFFPTNVAPLYTQSFDSSKAQIYGQRAAAYLTRNGILDYMGGTPASLFPTGEQWDLPNAWPPLQSIIVQALRNSNEESAEKLAKELAIRWLRANHKGYSQSGQMFEKYDALNPGKFGGGGEYVVQEGFGWTNGVVYEFLNSYPNATPDDNVHMNNN.

A signal peptide spans 1 to 32 (MAKTTPMAKPSVGLLTLQVLVFCALTGSLASA). Substrate contacts are provided by residues R184 and 191-192 (WD). The N-linked (GlcNAc...) asparagine glycan is linked to N207. Substrate contacts are provided by residues N228, 237–239 (RSQ), 302–304 (RPE), and G336. The active-site Proton donor/acceptor is D338. Residue N348 is glycosylated (N-linked (GlcNAc...) asparagine). The active-site Proton donor/acceptor is E535. E550 lines the substrate pocket.

It belongs to the glycosyl hydrolase 37 family. As to expression, expressed by the venom gland.

Its subcellular location is the secreted. The catalysed reaction is alpha,alpha-trehalose + H2O = alpha-D-glucose + beta-D-glucose. The polypeptide is Trehalase (tre1) (Pimpla hypochondriaca (Parasitoid wasp)).